Consider the following 523-residue polypeptide: NAD(P)H-quinone oxidoreductase subunit 2 (523 aa).

14 helical membrane passes run A29–A49, W57–W77, L94–W114, P123–G143, L147–Y167, L182–L202, A223–F243, P255–L275, L291–Q311, M317–T337, V345–F365, L389–G409, L424–I444, and I477–F497.

The protein belongs to the complex I subunit 2 family. In terms of assembly, NDH-1 can be composed of about 15 different subunits; different subcomplexes with different compositions have been identified which probably have different functions.

The protein localises to the cellular thylakoid membrane. It catalyses the reaction a plastoquinone + NADH + (n+1) H(+)(in) = a plastoquinol + NAD(+) + n H(+)(out). The enzyme catalyses a plastoquinone + NADPH + (n+1) H(+)(in) = a plastoquinol + NADP(+) + n H(+)(out). In terms of biological role, NDH-1 shuttles electrons from an unknown electron donor, via FMN and iron-sulfur (Fe-S) centers, to quinones in the respiratory and/or the photosynthetic chain. The immediate electron acceptor for the enzyme in this species is believed to be plastoquinone. Couples the redox reaction to proton translocation, and thus conserves the redox energy in a proton gradient. Cyanobacterial NDH-1 also plays a role in inorganic carbon-concentration. The polypeptide is NAD(P)H-quinone oxidoreductase subunit 2 (Prochlorococcus marinus (strain MIT 9313)).